The chain runs to 439 residues: Ribosomal protein uS12 methylthiotransferase RimO (439 aa).

The region spanning 5 to 116 is the MTTase N-terminal domain; that stretch reads PTIAISHLGC…IVNVIERVEL (112 aa). [4Fe-4S] cluster-binding residues include C14, C50, C79, C154, C158, and C161. In terms of domain architecture, Radical SAM core spans 140-369; the sequence is TTTEGVAYLR…MELQQPISQK (230 aa). Residues 372-438 form the TRAM domain; sequence QQEVGKIVDV…TYDLYGQVVN (67 aa).

This sequence belongs to the methylthiotransferase family. RimO subfamily. Requires [4Fe-4S] cluster as cofactor.

It localises to the cytoplasm. The catalysed reaction is L-aspartate(89)-[ribosomal protein uS12]-hydrogen + (sulfur carrier)-SH + AH2 + 2 S-adenosyl-L-methionine = 3-methylsulfanyl-L-aspartate(89)-[ribosomal protein uS12]-hydrogen + (sulfur carrier)-H + 5'-deoxyadenosine + L-methionine + A + S-adenosyl-L-homocysteine + 2 H(+). In terms of biological role, catalyzes the methylthiolation of an aspartic acid residue of ribosomal protein uS12. In Nostoc punctiforme (strain ATCC 29133 / PCC 73102), this protein is Ribosomal protein uS12 methylthiotransferase RimO.